Reading from the N-terminus, the 1401-residue chain is Lysine-specific demethylase 6A (1401 aa).

An interaction with SUPT6H region spans residues 1–1095 (MKSCGVSLAT…TNIDLSDDKK (1095 aa)). TPR repeat units follow at residues 93-126 (SDFF…QSDY), 130-163 (AAFL…DPSF), 170-199 (HLRL…DCNP), 205-238 (AEIQ…ENLS), 250-283 (GWMH…DPNS), 284-317 (GQSW…SEAS), 318-351 (ADTW…DHGH), and 352-385 (AAAW…KSCS). Over residues 437-449 (AMNTAQQNTSDNW) the composition is skewed to polar residues. Residues 437 to 457 (AMNTAQQNTSDNWSGGHAVSH) are disordered. Arg-519 bears the Omega-N-methylarginine mark. The interval 521 to 541 (TGIPNGPTADSSLPTNSVSGQ) is disordered. Arg-549 carries the omega-N-methylarginine modification. Composition is skewed to polar residues over residues 624-652 (LTSS…SHSA) and 660-724 (LSST…SGNI). 5 disordered regions span residues 624–746 (LTSS…SVEG), 758–778 (AVCS…SDNP), 810–864 (KTDN…ESQS), 914–940 (LLDK…NPPT), and 1043–1079 (FQES…KGPF). Position 769 is a phosphoserine (Ser-769). Residues 814–833 (SVASSPSSAISTATPSPKST) show a composition bias toward low complexity. Thr-827 is modified (phosphothreonine). Ser-829 carries the phosphoserine modification. The segment covering 834-848 (EQTTTNSVTSLNSPH) has biased composition (polar residues). Pro residues predominate over residues 918–931 (CPPPRPPSSPYPPL). Residues 1046–1063 (SLREENEKRSHHKDHSDS) show a composition bias toward basic and acidic residues. The 164-residue stretch at 1095–1258 (KWKLQLHELT…YKLAVERYEW (164 aa)) folds into the JmjC domain. The Fe cation site is built by His-1146, Glu-1148, and His-1226. Cys-1331, Cys-1334, Cys-1358, and Cys-1361 together coordinate Zn(2+).

It belongs to the UTX family. In terms of assembly, interacts with TLE1. Component of the MLL2/3 complex (also named ASCOM complex), at least composed of KMT2D/MLL2 or KMT2C/MLL3, ASH2L, RBBP5, WDR5, NCOA6, DPY30, KDM6A (or KDM6B), PAXIP1/PTIP, PAGR1 and alpha- and beta-tubulin. Interacts with SUPT6H. Interacts with SMARCA4. Interacts with PROSER1. L-ascorbate is required as a cofactor. Requires Fe(2+) as cofactor.

It is found in the nucleus. The catalysed reaction is N(6),N(6),N(6)-trimethyl-L-lysyl(27)-[histone H3] + 2 2-oxoglutarate + 2 O2 = N(6)-methyl-L-lysyl(27)-[histone H3] + 2 formaldehyde + 2 succinate + 2 CO2. Its function is as follows. Histone demethylase that specifically demethylates 'Lys-27' of histone H3, thereby playing a central role in histone code. Demethylates trimethylated and dimethylated but not monomethylated H3 'Lys-27'. Plays a central role in regulation of posterior development, by regulating HOX gene expression. Demethylation of 'Lys-27' of histone H3 is concomitant with methylation of 'Lys-4' of histone H3, and regulates the recruitment of the PRC1 complex and monoubiquitination of histone H2A. Plays a demethylase-independent role in chromatin remodeling to regulate T-box family member-dependent gene expression. This chain is Lysine-specific demethylase 6A (KDM6A), found in Homo sapiens (Human).